The following is a 467-amino-acid chain: Glutamyl-tRNA reductase (467 aa).

Residues 49–52 (TCNR), Ser109, 114–116 (EQQ), and Gln120 contribute to the substrate site. The active-site Nucleophile is Cys50. 189–194 (GAGAMG) serves as a coordination point for NADP(+). Residues 446–467 (GFSDTTRYGTSPAQSSSKYHAE) form a disordered region. Polar residues predominate over residues 447–467 (FSDTTRYGTSPAQSSSKYHAE).

It belongs to the glutamyl-tRNA reductase family. Homodimer.

It carries out the reaction (S)-4-amino-5-oxopentanoate + tRNA(Glu) + NADP(+) = L-glutamyl-tRNA(Glu) + NADPH + H(+). It participates in porphyrin-containing compound metabolism; protoporphyrin-IX biosynthesis; 5-aminolevulinate from L-glutamyl-tRNA(Glu): step 1/2. In terms of biological role, catalyzes the NADPH-dependent reduction of glutamyl-tRNA(Glu) to glutamate 1-semialdehyde (GSA). The sequence is that of Glutamyl-tRNA reductase from Mycobacterium leprae (strain TN).